Consider the following 459-residue polypeptide: DIMBOA UDP-glucosyltransferase BX8 (459 aa).

His19 functions as the Proton acceptor in the catalytic mechanism. An an anthocyanidin-binding site is contributed by His19. Asp119 acts as the Charge relay in catalysis. 8 residues coordinate UDP-alpha-D-glucose: Thr141, Ala340, Gln342, His357, Trp360, Asn361, Ser362, and Glu365. An an anthocyanidin-binding site is contributed by Gly380. The UDP-alpha-D-glucose site is built by Asp381 and Gln382.

The protein belongs to the UDP-glycosyltransferase family. The cofactor is Mg(2+). It depends on Ca(2+) as a cofactor. As to expression, expressed at the same levels in roots and shoots.

It catalyses the reaction DIMBOA + UDP-alpha-D-glucose = DIMBOA beta-D-glucoside + UDP + H(+). The catalysed reaction is DIBOA + UDP-alpha-D-glucose = DIBOA beta-D-glucoside + UDP + H(+). Its function is as follows. Glucosyltransferase involved in the last step of benzoxazinoid glucoside biosynthesis. Catalyzes the glucosylation of hydroxamic acids utilizing UDP-glucose as glucose doner, reducing the toxicity of these natural insecticides for storage. Can use DIMBOA and DIBOA as substrates, HMBOA (2-hydroxy-7-methoxy-2H-1,4-benzoxazin-3(4H)-one) and HBOA (2-hydroxy-2H-1,4-benzoxazin-3(4H)-one) with a lower efficiency, but not indole acetic acid or quercitin. This Zea mays (Maize) protein is DIMBOA UDP-glucosyltransferase BX8 (Bx8).